The sequence spans 550 residues: Methionine--tRNA ligase (550 aa).

A 'HIGH' region motif is present at residues 12–22; it reads PYANGPLHFGH. Zn(2+) contacts are provided by Cys-144, Cys-147, Cys-157, and Cys-160. The 'KMSKS' region motif lies at 330–334; that stretch reads QFSKS. Lys-333 contributes to the ATP binding site.

This sequence belongs to the class-I aminoacyl-tRNA synthetase family. MetG type 1 subfamily. Monomer. It depends on Zn(2+) as a cofactor.

The protein resides in the cytoplasm. It catalyses the reaction tRNA(Met) + L-methionine + ATP = L-methionyl-tRNA(Met) + AMP + diphosphate. In terms of biological role, is required not only for elongation of protein synthesis but also for the initiation of all mRNA translation through initiator tRNA(fMet) aminoacylation. This Chlamydia caviae (strain ATCC VR-813 / DSM 19441 / 03DC25 / GPIC) (Chlamydophila caviae) protein is Methionine--tRNA ligase.